The following is a 285-amino-acid chain: NAD kinase (285 aa).

Catalysis depends on Asp-68, which acts as the Proton acceptor. Residues 68–69 (DG), 142–143 (ND), Arg-153, Arg-170, Asp-172, and Gln-242 each bind NAD(+).

The protein belongs to the NAD kinase family. Requires a divalent metal cation as cofactor.

It is found in the cytoplasm. It catalyses the reaction NAD(+) + ATP = ADP + NADP(+) + H(+). Functionally, involved in the regulation of the intracellular balance of NAD and NADP, and is a key enzyme in the biosynthesis of NADP. Catalyzes specifically the phosphorylation on 2'-hydroxyl of the adenosine moiety of NAD to yield NADP. The polypeptide is NAD kinase (Acidobacterium capsulatum (strain ATCC 51196 / DSM 11244 / BCRC 80197 / JCM 7670 / NBRC 15755 / NCIMB 13165 / 161)).